We begin with the raw amino-acid sequence, 414 residues long: F-box protein At3g26010 (414 aa).

One can recognise an F-box domain in the interval Asn-5–Ser-52.

In Arabidopsis thaliana (Mouse-ear cress), this protein is F-box protein At3g26010.